The following is a 306-amino-acid chain: [methyl-Co(III) glycine betaine-specific corrinoid protein]--tetrahydrofolate methyltransferase (306 aa).

The protein belongs to the MtrH family.

The enzyme catalyses methyl-Co(III)-[glycine betaine-specific corrinoid protein] + (6S)-5,6,7,8-tetrahydrofolate = Co(I)-[glycine betaine-specific corrinoid protein] + (6S)-5-methyl-5,6,7,8-tetrahydrofolate + H(+). Functionally, methyltransferase able to catalyze the transfer of a methyl group from methylcobalamin (methylCbl) to tetrahydrofolate (THF) in vitro, to generate methyl-THF and cob(I)alamin. In vivo, the methyl group probably comes from the adjacently encoded methylated corrinoid protein DSY3155. The methyl group may then be ultimately converted to carbon dioxide, and its oxidation would also provide reducing equivalents for anaerobic respiration. Thus, may function in the pathway that allows anaerobic methylotrophic growth of D.hafniense using glycine betaine. This is [methyl-Co(III) glycine betaine-specific corrinoid protein]--tetrahydrofolate methyltransferase from Desulfitobacterium hafniense (strain Y51).